A 69-amino-acid polypeptide reads, in one-letter code: Cytochrome c oxidase subunit 8A, mitochondrial (69 aa).

The N-terminal 25 residues, 1 to 25, are a transit peptide targeting the mitochondrion; the sequence is MSVLTPLLLRGLAGSARRLPVPRAQ. The SIFI-degron motif lies at 2 to 19; the sequence is SVLTPLLLRGLAGSARRL. Topologically, residues 26-36 are mitochondrial matrix; the sequence is IHSKPPREQLG. The chain crosses the membrane as a helical span at residues 37-60; sequence TMDVAIGITSCFLCFLLPAGWVLS. Over 61-69 the chain is Mitochondrial intermembrane; that stretch reads HLESYKKRE.

The protein belongs to the cytochrome c oxidase VIII family. Component of the cytochrome c oxidase (complex IV, CIV), a multisubunit enzyme composed of 14 subunits. The complex is composed of a catalytic core of 3 subunits MT-CO1, MT-CO2 and MT-CO3, encoded in the mitochondrial DNA, and 11 supernumerary subunits COX4I, COX5A, COX5B, COX6A, COX6B, COX6C, COX7A, COX7B, COX7C, COX8 and NDUFA4, which are encoded in the nuclear genome. The complex exists as a monomer or a dimer and forms supercomplexes (SCs) in the inner mitochondrial membrane with NADH-ubiquinone oxidoreductase (complex I, CI) and ubiquinol-cytochrome c oxidoreductase (cytochrome b-c1 complex, complex III, CIII), resulting in different assemblies (supercomplex SCI(1)III(2)IV(1) and megacomplex MCI(2)III(2)IV(2)). In terms of processing, in response to mitochondrial stress, the precursor protein is ubiquitinated by the SIFI complex in the cytoplasm before mitochondrial import, leading to its degradation. Within the SIFI complex, UBR4 initiates ubiquitin chain that are further elongated or branched by KCMF1.

It is found in the mitochondrion inner membrane. Its pathway is energy metabolism; oxidative phosphorylation. Its function is as follows. Component of the cytochrome c oxidase, the last enzyme in the mitochondrial electron transport chain which drives oxidative phosphorylation. The respiratory chain contains 3 multisubunit complexes succinate dehydrogenase (complex II, CII), ubiquinol-cytochrome c oxidoreductase (cytochrome b-c1 complex, complex III, CIII) and cytochrome c oxidase (complex IV, CIV), that cooperate to transfer electrons derived from NADH and succinate to molecular oxygen, creating an electrochemical gradient over the inner membrane that drives transmembrane transport and the ATP synthase. Cytochrome c oxidase is the component of the respiratory chain that catalyzes the reduction of oxygen to water. Electrons originating from reduced cytochrome c in the intermembrane space (IMS) are transferred via the dinuclear copper A center (CU(A)) of subunit 2 and heme A of subunit 1 to the active site in subunit 1, a binuclear center (BNC) formed by heme A3 and copper B (CU(B)). The BNC reduces molecular oxygen to 2 water molecules using 4 electrons from cytochrome c in the IMS and 4 protons from the mitochondrial matrix. The chain is Cytochrome c oxidase subunit 8A, mitochondrial (COX8A) from Carlito syrichta (Philippine tarsier).